Reading from the N-terminus, the 483-residue chain is PAT complex subunit CCDC47 (483 aa).

An N-terminal signal peptide occupies residues 1–20; sequence MKAFHTFCVVLLVFGSVSEA. Topologically, residues 21–135 are cytoplasmic; sequence KFDDFEDEED…PAHLQNSWES (115 aa). Residues 46–118 are disordered; that stretch reads MEDSVTESPQ…PDTSSSKNKD (73 aa). A compositionally biased stretch (acidic residues) spans 60–104; sequence TEDDEDETTVELEGQDENQEGDFEDADTQEGDTESEPYDDEEFEG. Positions 105 to 118 are enriched in basic and acidic residues; the sequence is YEDKPDTSSSKNKD. The chain crosses the membrane as a helical span at residues 136–155; sequence YYLEILMVTGLLAYIMNYII. Residues 156–483 lie on the Lumenal side of the membrane; sequence GKNKNSRLAQ…KMKQIKVKAM (328 aa). Asparagine 178 carries an N-linked (GlcNAc...) asparagine glycan. The disordered stretch occupies residues 424 to 483; it reads QRQEAAQSRREEKKRAEKERIMNEEDPEKQRRLEEAALRREQKKLEKKQMKMKQIKVKAM. The span at 430–472 shows a compositional bias: basic and acidic residues; sequence QSRREEKKRAEKERIMNEEDPEKQRRLEEAALRREQKKLEKKQ. Positions 450 to 483 form a coiled coil; it reads PEKQRRLEEAALRREQKKLEKKQMKMKQIKVKAM. Residues 473–483 show a composition bias toward basic residues; the sequence is MKMKQIKVKAM.

This sequence belongs to the CCDC47 family. Component of the PAT complex, composed of WDR83OS/Asterix and CCDC47. The PAT complex is part of the multi-pass translocon (MPT) complex, composed of three subcomplexes, the GEL complex (composed of RAB5IF/OPTI and TMCO1), the BOS complex (composed of NCLN/Nicalin, NOMO and TMEM147) and the PAT complex (composed of WDR83OS/Asterix and CCDC47). The MPT complex associates with the SEC61 complex. Interacts with VCP, HSPA5, DERL1, DERL2 and SELENOS.

Its subcellular location is the endoplasmic reticulum membrane. The protein resides in the rough endoplasmic reticulum membrane. Component of the multi-pass translocon (MPT) complex that mediates insertion of multi-pass membrane proteins into the lipid bilayer of membranes. The MPT complex takes over after the SEC61 complex: following membrane insertion of the first few transmembrane segments of proteins by the SEC61 complex, the MPT complex occludes the lateral gate of the SEC61 complex to promote insertion of subsequent transmembrane regions. Within the MPT complex, the PAT subcomplex sequesters any highly polar regions in the transmembrane domains away from the non-polar membrane environment until they can be buried in the interior of the fully assembled protein. Within the PAT subcomplex, CCDC47 occludes the lateral gate of the SEC61 complex. Involved in the regulation of calcium ion homeostasis in the ER. Required for proper protein degradation via the ERAD (ER-associated degradation) pathway. Has an essential role in the maintenance of ER organization during embryogenesis. This chain is PAT complex subunit CCDC47, found in Homo sapiens (Human).